The chain runs to 271 residues: Formamidopyrimidine-DNA glycosylase (271 aa).

Catalysis depends on Pro2, which acts as the Schiff-base intermediate with DNA. Glu3 serves as the catalytic Proton donor. The active-site Proton donor; for beta-elimination activity is the Lys58. Positions 91, 110, and 152 each coordinate DNA. An FPG-type zinc finger spans residues 237–271 (LVYGREGQPCVHCGRPIRCETIGQRSSYFCTRCQR). Catalysis depends on Arg261, which acts as the Proton donor; for delta-elimination activity.

Belongs to the FPG family. Monomer. The cofactor is Zn(2+).

It catalyses the reaction Hydrolysis of DNA containing ring-opened 7-methylguanine residues, releasing 2,6-diamino-4-hydroxy-5-(N-methyl)formamidopyrimidine.. The enzyme catalyses 2'-deoxyribonucleotide-(2'-deoxyribose 5'-phosphate)-2'-deoxyribonucleotide-DNA = a 3'-end 2'-deoxyribonucleotide-(2,3-dehydro-2,3-deoxyribose 5'-phosphate)-DNA + a 5'-end 5'-phospho-2'-deoxyribonucleoside-DNA + H(+). Functionally, involved in base excision repair of DNA damaged by oxidation or by mutagenic agents. Acts as a DNA glycosylase that recognizes and removes damaged bases. Has a preference for oxidized purines, such as 7,8-dihydro-8-oxoguanine (8-oxoG). Has AP (apurinic/apyrimidinic) lyase activity and introduces nicks in the DNA strand. Cleaves the DNA backbone by beta-delta elimination to generate a single-strand break at the site of the removed base with both 3'- and 5'-phosphates. The sequence is that of Formamidopyrimidine-DNA glycosylase from Syntrophotalea carbinolica (strain DSM 2380 / NBRC 103641 / GraBd1) (Pelobacter carbinolicus).